The sequence spans 216 residues: A-type ATP synthase subunit D (216 aa).

This sequence belongs to the V-ATPase D subunit family. As to quaternary structure, has multiple subunits with at least A(3), B(3), C, D, E, F, H, I and proteolipid K(x). Post-translationally, the N-terminus is blocked.

It is found in the cell membrane. Component of the A-type ATP synthase that produces ATP from ADP in the presence of a proton gradient across the membrane. The sequence is that of A-type ATP synthase subunit D from Sulfurisphaera tokodaii (strain DSM 16993 / JCM 10545 / NBRC 100140 / 7) (Sulfolobus tokodaii).